We begin with the raw amino-acid sequence, 915 residues long: Translation initiation factor IF-2 (915 aa).

Disordered stretches follow at residues 1–105 (MSEG…RALT) and 121–295 (VEAA…RAAI). Low complexity predominate over residues 57–81 (PGTPSAPEGGSSSAPAPQSGNAPQG). Gly residues predominate over residues 84–101 (RSGGGNRGSGRGGAGGAG). Basic and acidic residues-rich tracts occupy residues 121 to 135 (VEAA…EQEK) and 143 to 180 (EEAR…RKAA). Residues 186-195 (AEAPPVPPPA) show a composition bias toward pro residues. 2 stretches are compositionally biased toward low complexity: residues 201 to 213 (AAPS…SRTA) and 230 to 239 (KVPVAAPSAP). Positions 243–256 (RLRERGDEGEEERK) are enriched in basic and acidic residues. A compositionally biased stretch (low complexity) spans 266–278 (PAPRKAAAPVAKK). The span at 279–295 (AVAEPRRGGRIDVRAAI) shows a compositional bias: basic and acidic residues. The region spanning 414-584 (PRPPVVTVMG…LLQAEVLDLK (171 aa)) is the tr-type G domain. Residues 423–430 (GHVDHGKT) are G1. GTP is bound at residue 423–430 (GHVDHGKT). Residues 448–452 (GITQH) are G2. A G3 region spans residues 470-473 (DTPG). GTP contacts are provided by residues 470-474 (DTPGH) and 524-527 (NKCD). The interval 524–527 (NKCD) is G4. The G5 stretch occupies residues 560-562 (SAL).

This sequence belongs to the TRAFAC class translation factor GTPase superfamily. Classic translation factor GTPase family. IF-2 subfamily.

It localises to the cytoplasm. Its function is as follows. One of the essential components for the initiation of protein synthesis. Protects formylmethionyl-tRNA from spontaneous hydrolysis and promotes its binding to the 30S ribosomal subunits. Also involved in the hydrolysis of GTP during the formation of the 70S ribosomal complex. In Granulibacter bethesdensis (strain ATCC BAA-1260 / CGDNIH1), this protein is Translation initiation factor IF-2.